The primary structure comprises 427 residues: Glutamate-1-semialdehyde 2,1-aminomutase (427 aa).

Residue K265 is modified to N6-(pyridoxal phosphate)lysine.

The protein belongs to the class-III pyridoxal-phosphate-dependent aminotransferase family. HemL subfamily. As to quaternary structure, homodimer. The cofactor is pyridoxal 5'-phosphate.

It localises to the cytoplasm. It catalyses the reaction (S)-4-amino-5-oxopentanoate = 5-aminolevulinate. It participates in porphyrin-containing compound metabolism; protoporphyrin-IX biosynthesis; 5-aminolevulinate from L-glutamyl-tRNA(Glu): step 2/2. This chain is Glutamate-1-semialdehyde 2,1-aminomutase, found in Burkholderia ambifaria (strain MC40-6).